Reading from the N-terminus, the 374-residue chain is Retron Eco8 reverse transcriptase (374 aa).

The region spanning 25 to 252 is the Reverse transcriptase domain; sequence ENIITQSAIP…KEISINGYVI (228 aa). Mg(2+)-binding residues include D107, D200, and D201.

This sequence belongs to the bacterial reverse transcriptase family.

It carries out the reaction DNA(n) + a 2'-deoxyribonucleoside 5'-triphosphate = DNA(n+1) + diphosphate. Its function is as follows. Reverse transcriptase (RT) component of antiviral defense system retron Eco8, composed of this RT, the following endonuclease and a non-coding RNA (ncRNA) encoded between them. Expression of retron Eco8 confers protection against bacteriophages T4, T6, T7 and SECphi4, SECphi6 and SECphi18. At multiplicity of infection (MOI) of 0.02 cultures slow growth when infected with SECphi4 but do not collapse, at MOI 2 cultures collapse. Responsible for synthesis of msDNA (a branched molecule with RNA linked by a 2',5'-phosphodiester bond to ssDNA). The retron transcript serves as primer (from a conserved internal G residue) and template for the reaction, and codes for the RT. The sequence is that of Retron Eco8 reverse transcriptase from Escherichia coli.